The following is a 508-amino-acid chain: MSRFVQDLSKAMSQDGASQFQEVIRQELELSVKKELEKILTTAPSHEFEHTKKDLDGFRKLFHRFLQEKGPSVDWGKIQRPPEDSIQPYEKIKARGLPDNVSSVLNKLVVVKLNGGLGTSMGCKGPKSLIGVRNENTFLDLTVQQIEHLNKTYDTDVPLVLMNSFNTDEDTKKILQKYNHCRVKIYTFNQSRYPRINKESLLPVAKNVSYSGENTEAWYPPGHGDIYASFYNSGLLDTFIGEGKEYIFVSNIDNLGATVDLYILNHLMNPPNGKPCEFVMEVTNKTRADVKGGTLTQYEGKLRLVEIAQVPKAHVDEFKSVSKFKIFNTNNLWISLAAVKRLQEQNAIDMEIIVNPKTLDGGLNVIQLETAVGAAIKSFENSLGINVPRSRFLPVKTTSDLLLVMSNLYSLNAGSLTMSEKREFPTVPLVKLGSSFTKVQDYLRRFESIPDMLELDHLTVSGDVTFGKNVSLKGTVIIIANHGDRIDIPPGAVLENKIVSGNLRILDH.

The residue at position 2 (serine 2) is a Blocked amino end (Ser). Serine 13 is subject to Phosphoserine. Residues leucine 113–glycine 116, lysine 127, glutamine 190, and glycine 222 each bind UTP. Glycine 115 to glycine 116 contributes to the substrate binding site. A Mg(2+)-binding site is contributed by lysine 127. Substrate contacts are provided by residues histidine 223 and asparagine 251 to aspartate 253. Residues aspartate 253 and lysine 396 each coordinate UTP. Residue aspartate 253 participates in Mg(2+) binding. Residue lysine 396 is part of the active site. The residue at position 426 (threonine 426) is a Phosphothreonine. Serine 434 is modified (phosphoserine). Lysine 438 carries the post-translational modification N6-acetyllysine. Serine 448 and serine 461 each carry phosphoserine. The oligomerization stretch occupies residues histidine 457–histidine 508. A critical for end-to-end subunit interaction region spans residues asparagine 502 to leucine 503.

The protein belongs to the UDPGP type 1 family. In terms of assembly, homooctamer.

The protein localises to the cytoplasm. The enzyme catalyses alpha-D-glucose 1-phosphate + UTP + H(+) = UDP-alpha-D-glucose + diphosphate. It functions in the pathway glycan biosynthesis; glycogen biosynthesis. Its function is as follows. UTP--glucose-1-phosphate uridylyltransferase catalyzing the conversion of glucose-1-phosphate into UDP-glucose, a crucial precursor for the production of glycogen. The chain is UTP--glucose-1-phosphate uridylyltransferase (UGP2) from Bos taurus (Bovine).